Reading from the N-terminus, the 372-residue chain is Glutamate 5-kinase (372 aa).

Residue lysine 14 coordinates ATP. Residues serine 54, aspartate 141, and asparagine 153 each contribute to the substrate site. Position 173–174 (173–174) interacts with ATP; that stretch reads TD. The PUA domain occupies 280–358; sequence RGTLVLDDGA…ESIVRELGYM (79 aa).

It belongs to the glutamate 5-kinase family.

Its subcellular location is the cytoplasm. The catalysed reaction is L-glutamate + ATP = L-glutamyl 5-phosphate + ADP. It participates in amino-acid biosynthesis; L-proline biosynthesis; L-glutamate 5-semialdehyde from L-glutamate: step 1/2. Functionally, catalyzes the transfer of a phosphate group to glutamate to form L-glutamate 5-phosphate. The protein is Glutamate 5-kinase of Pseudomonas syringae pv. syringae (strain B728a).